We begin with the raw amino-acid sequence, 276 residues long: Lipoyl synthase (276 aa).

Positions 27, 32, 38, 53, 57, 60, and 266 each coordinate [4Fe-4S] cluster. The 217-residue stretch at 39–255 folds into the Radical SAM core domain; the sequence is FGNKTATFMI…EEIGYEMGFK (217 aa).

The protein belongs to the radical SAM superfamily. Lipoyl synthase family. Requires [4Fe-4S] cluster as cofactor.

The protein resides in the cytoplasm. It carries out the reaction [[Fe-S] cluster scaffold protein carrying a second [4Fe-4S](2+) cluster] + N(6)-octanoyl-L-lysyl-[protein] + 2 oxidized [2Fe-2S]-[ferredoxin] + 2 S-adenosyl-L-methionine + 4 H(+) = [[Fe-S] cluster scaffold protein] + N(6)-[(R)-dihydrolipoyl]-L-lysyl-[protein] + 4 Fe(3+) + 2 hydrogen sulfide + 2 5'-deoxyadenosine + 2 L-methionine + 2 reduced [2Fe-2S]-[ferredoxin]. It participates in protein modification; protein lipoylation via endogenous pathway; protein N(6)-(lipoyl)lysine from octanoyl-[acyl-carrier-protein]: step 2/2. Catalyzes the radical-mediated insertion of two sulfur atoms into the C-6 and C-8 positions of the octanoyl moiety bound to the lipoyl domains of lipoate-dependent enzymes, thereby converting the octanoylated domains into lipoylated derivatives. This chain is Lipoyl synthase, found in Aquifex aeolicus (strain VF5).